The chain runs to 130 residues: Small ribosomal subunit protein uS8 (130 aa).

This sequence belongs to the universal ribosomal protein uS8 family. In terms of assembly, part of the 30S ribosomal subunit. Contacts proteins S5 and S12.

Its function is as follows. One of the primary rRNA binding proteins, it binds directly to 16S rRNA central domain where it helps coordinate assembly of the platform of the 30S subunit. The polypeptide is Small ribosomal subunit protein uS8 (Ruegeria sp. (strain TM1040) (Silicibacter sp.)).